The following is a 148-amino-acid chain: Putative nickel-responsive regulator (148 aa).

Residues His-88, His-99, His-101, and Cys-107 each coordinate Ni(2+).

Belongs to the transcriptional regulatory CopG/NikR family. Ni(2+) serves as cofactor.

Functionally, transcriptional regulator. In Helicobacter pylori (strain Shi470), this protein is Putative nickel-responsive regulator.